Reading from the N-terminus, the 228-residue chain is Lipoprotein-releasing system ATP-binding protein LolD 2 (228 aa).

The region spanning Arg9–Val228 is the ABC transporter domain. Gly42–Ser49 contributes to the ATP binding site.

Belongs to the ABC transporter superfamily. Lipoprotein translocase (TC 3.A.1.125) family. As to quaternary structure, the complex is composed of two ATP-binding proteins (LolD) and two transmembrane proteins (LolC and LolE).

It localises to the cell inner membrane. Its function is as follows. Part of the ABC transporter complex LolCDE involved in the translocation of mature outer membrane-directed lipoproteins, from the inner membrane to the periplasmic chaperone, LolA. Responsible for the formation of the LolA-lipoprotein complex in an ATP-dependent manner. The protein is Lipoprotein-releasing system ATP-binding protein LolD 2 of Caulobacter vibrioides (strain ATCC 19089 / CIP 103742 / CB 15) (Caulobacter crescentus).